Reading from the N-terminus, the 536-residue chain is MKQGTTGMYCEVGPCTNAKDAHSPCLRPPGYAKPPTVRVCRTRGHNLPLSKVPGPKLAALTKWYGFYHNVIRDGQYSLSFSSLHKKYDSPVIRIGPNAVHVDDPSFYQEMFSMTTKYYKEPEFYKALGAEGAMASILDPKHHRMYRNHLRPLFASRAVDGVVPRLKLELEKATRIFDMHRKDYHPLNIQALYRSFTSDMVCELLFGESPDFIGDGNGYHPFVAALDRFTAFSWLVVYFPWVKSIQFHLPFGLGDKLAPEFNDFKRQCETWEAKAQLKRESGVQVGQKNLFDYYAELGAGPETAVSGVAQPVEDAFNFLTAGTESTAYTLSSTAFHILNNPQVFKKLHEELDASVDFIRNDFNAKQIQALPYLGAVLKETMRLSTAVPGNLPRLVPPGGVTVGSVYLPEGTYPQQTIVSSSHLSIITNDTIFHDPYKFKPERWLGEEGKDLERWHVGFSRGPRRCIGSSLAYLELFCVTAYVFSRFEMSLFETDESSMQWVDRISARNRKDVQVRILSDRWEKEAHSIAGGTLLKEE.

Cys464 is a binding site for heme.

Belongs to the cytochrome P450 family. Heme is required as a cofactor.

Its pathway is alkaloid biosynthesis. Functionally, cytochrome P450 monooxygenase; part of the gene cluster that mediates the biosynthesis of paraherquamide, a fungal indole alkaloid that belongs to a family of natural products containing a characteristic bicyclo[2.2.2]diazaoctane core. The first steps in the biosynthesis of paraherquamide is the production of the beta-methyl-proline precursor from L-isoleucine. They require oxidation of a terminally hydroxylated L-isoleucine to the corresponding aldehyde by enzymes which have still to be identified. Spontaneous cyclization and dehydration would yield the 4-methyl pyrolline-5-carboxylic acid, which is then reduced by the pyrroline-5-carboxylate reductase phqD leading to the beta-methyl-proline precursor. The next step of paraherquamide biosynthesis involves coupling of beta-methyl-proline and L-tryptophan by the bimodular NRPS phqB, to produce a monooxopiperazine intermediate. The reductase (R) domain of phqB utilizes NADPH for hydride transfer to reduce the thioester bond of the T domain-tethered linear dipeptide to a hemithioaminal intermediate, which spontaneously cleaves the C-S bond to release the aldehyde product. This compound undergoes spontaneous cyclization and dehydration to give a dienamine which is reverse prenylated at C-2 by the reverse prenyltransferase phqJ. The other prenyltransferase present in the cluster, phqI may be a redundant gene in the pathway. During biosynthetic assembly, the key step to produce the polycyclic core is catalyzed by the bifunctional reductase and intramolecular [4+2] Diels-Alderase, phqE, resulting in formation of the [2.2.2] diazaoctane intermediate preparaherquamide. Following formation of preparaherquamide, an indole 2,3-epoxidation-initiated pinacol-like rearrangement is catalyzed by the phqK FAD-dependent monooxygenase. The prenyltransferase phqA, the cytochrome P450 monooxygenase phqL, and the FAD-linked oxidoreductase phqH (or the cytochrome P450 monooxygenase phqM), are proposed to be involved in the formation of the pyran ring. The FAD-dependent monooxygenase phqK is likely responsible for generation of the spiro-oxindole, and the N-methylation is likely mediated by the phqN methyltransferase leading to the isolable natural product paraherquamide F. However, the order of these biosynthetic steps has still to be determined. In late-stage paraherquamide biosynthesis, the third P450 monooxygenase, phqO, is probably responsible for the C-14 hydroxylation, transforming paraherquamide F to paraherquamide G, and paraherquamide E to the final product paraherquamide A. The expansion from the 6-membered ring pyran (in paraherquamides F and G) to the 7-membered dioxepin ring (in paraherquamides A and E) represents a poorly understood but intriguing process that probably involves the 2-oxoglutarate-dependent dioxygenase phqC. Finally, the remaining members of the paraherquamide cluster, including phqI as well as phqM (or phqH), do not have a clearly prescribed role and appear to be redundant. This is Cytochrome P450 monooxygenase phqM from Penicillium fellutanum.